Consider the following 307-residue polypeptide: Pseudouridine-5'-phosphate glycosidase (307 aa).

The active-site Proton donor is the Glu-28. 2 residues coordinate substrate: Lys-89 and Val-109. Asp-141 is a Mn(2+) binding site. Substrate is bound at residue 143–145 (SAD). Lys-162 serves as the catalytic Nucleophile.

Belongs to the pseudouridine-5'-phosphate glycosidase family. Homotrimer. Mn(2+) serves as cofactor.

It carries out the reaction D-ribose 5-phosphate + uracil = psi-UMP + H2O. Catalyzes the reversible cleavage of pseudouridine 5'-phosphate (PsiMP) to ribose 5-phosphate and uracil. Functions biologically in the cleavage direction, as part of a pseudouridine degradation pathway. The chain is Pseudouridine-5'-phosphate glycosidase from Staphylococcus aureus (strain MW2).